We begin with the raw amino-acid sequence, 283 residues long: Alpha-ketoglutarate-dependent taurine dioxygenase (283 aa).

Positions 70, 73, and 95 each coordinate taurine. Fe cation contacts are provided by His99 and Asp101. Residue Val102 participates in taurine binding. Thr126 contacts 2-oxoglutarate. 3 positions are modified to 3-hydroxytryptophan; by autocatalysis: Trp128, Trp240, and Trp248. His255 provides a ligand contact to Fe cation. 2-oxoglutarate is bound by residues His255, Arg266, and Arg270. Arg270 lines the taurine pocket.

The protein belongs to the TfdA dioxygenase family. Homodimer. Was later shown to be a homotetramer arranged as a dimer of two dimers. The cofactor is Fe(2+).

The catalysed reaction is taurine + 2-oxoglutarate + O2 = aminoacetaldehyde + sulfite + succinate + CO2 + H(+). It functions in the pathway organosulfur degradation; taurine degradation via aerobic pathway; aminoacetaldehyde and sulfite from taurine: step 1/1. With respect to regulation, activated by ascorbate and inhibited by divalent metal ions such as zinc, copper and cobalt. In terms of biological role, catalyzes the alpha-ketoglutarate-dependent hydroxylation of taurine yielding sulfite and aminoacetaldehyde after decomposition of an unstable intermediate. Is required for the utilization of taurine (2-aminoethanesulfonate) as an alternative sulfur source for growth in the absence of sulfate. To a lesser extent, pentanesulfonate, 3-(N-morpholino)propanesulfonate and 1,3-dioxo-2-isoindolineethanesulfonate are also desulfonated by this enzyme in vitro; however, desulfonation by TauD of organosulfonates other than taurine seem to be of little or no importance for sulfur metabolism in vivo. This Escherichia coli (strain K12) protein is Alpha-ketoglutarate-dependent taurine dioxygenase (tauD).